The sequence spans 1090 residues: Aminopeptidase-like protein AC3.5 (1090 aa).

The Cytoplasmic portion of the chain corresponds to 1 to 77 (MEDVDLGKDR…KPKKRIACSP (77 aa)). Residues 21-33 (GNGSASNLNNRNN) are compositionally biased toward low complexity. The tract at residues 21–71 (GNGSASNLNNRNNIPLSEKAAKEPLQTQPQEAPPAPKPKVQKQKPPVKPKK) is disordered. Over residues 59-71 (KVQKQKPPVKPKK) the composition is skewed to basic residues. The chain crosses the membrane as a helical; Signal-anchor for type II membrane protein span at residues 78–98 (GSAICLFLLAVAAIIFAAFLG). At 99 to 1090 (HYLTKQNYEM…DEMESSEEQE (992 aa)) the chain is on the lumenal side. 5 N-linked (GlcNAc...) asparagine glycosylation sites follow: Asn115, Asn123, Asn143, Asn176, and Asn230. Positions 217 to 259 (VTKRAKKSVDSGTNSTSEMPEGSGEEAMATTATTTTTESTTPV) are disordered. The span at 241-257 (EEAMATTATTTTTESTT) shows a compositional bias: low complexity. N-linked (GlcNAc...) asparagine glycosylation is found at Asn402, Asn710, Asn723, Asn789, Asn894, Asn919, Asn964, and Asn993. Residues 1069 to 1080 (YLDGKMKGPAKD) are compositionally biased toward basic and acidic residues. The tract at residues 1069 to 1090 (YLDGKMKGPAKDDEMESSEEQE) is disordered. A compositionally biased stretch (acidic residues) spans 1081–1090 (DEMESSEEQE).

Belongs to the peptidase M1 family.

Its subcellular location is the membrane. The polypeptide is Aminopeptidase-like protein AC3.5 (Caenorhabditis elegans).